Reading from the N-terminus, the 448-residue chain is MKERSTELVEGFRHSVPYINAHRGKTFVIMLGGEAIAHENFTNIINDIGLLHSLGIRLVVVYGARPQIEQNLADHHYEPVYHKHTRVTDNKTLELVKQSAGLLQLDITARLSMNLNNTPLQGANINVVSGNFIIAQPLGVDDGVDYCHSGKIRRIDEHAINRQLDNGAIVLIGPVAVSVTGESFNLAFEDVATQLAIKLQAEKLIGFCSTQGVQDKDGKILSEVFLNQAPELIKELEVKGDYYSGTVCFLRSAIKACRRGVRRSHLLSYQADGSLLQELFSRDGIGTQIVMESAEQIRRANINDIGGILELIRPLEQQGILVRRSREQLEREIDKFIIIERDNLTIACAALYPYPEEKIGEMACLAVNPKYRSSLRGEVLLNRIAEHAKQLGLEKLFVLTTRSIHWFQERGFEPAELSMLPIQKQVLYNYQRRSKILMLNLEPQPGFT.

An N-acetyltransferase domain is found at 295–433 (EQIRRANIND…KQVLYNYQRR (139 aa)).

Belongs to the acetyltransferase family. ArgA subfamily. Homohexamer.

The protein localises to the cytoplasm. It carries out the reaction L-glutamate + acetyl-CoA = N-acetyl-L-glutamate + CoA + H(+). The protein operates within amino-acid biosynthesis; L-arginine biosynthesis; N(2)-acetyl-L-ornithine from L-glutamate: step 1/4. This is Amino-acid acetyltransferase from Photorhabdus laumondii subsp. laumondii (strain DSM 15139 / CIP 105565 / TT01) (Photorhabdus luminescens subsp. laumondii).